Consider the following 421-residue polypeptide: MGSRETPSSCSKTLETLDLETSDSSSPDADSPLEEQWLKSSPALKEDSVDVVLEDCKEPLSPSSPPTGREMIRYEVKVNRRSIEDICLCCGTLQVYTRHPLFEGGLCAPCKDKFLESLFLYDDDGHQSYCTICCSGGTLFICESPDCTRCYCFECVDILVGPGTSERINAMACWVCFLCLPFSRSGLLQRRKRWRHQLKAFHDQEGAGPMEIYKTVSAWKRQPVRVLSLFRNIDKVLKSLGFLESGSGSGGGTLKYVEDVTNVVRRDVEKWGPFDLVYGSTQPLGSSCDRCPGWYMFQFHRILQYALPRQESQRPFFWIFMDNLLLTEDDQETTTRFLQTEAVTLQDVRGRDYQNAMRVWSNIPGLKSKHAPLTPKEEEYLQAQVRSRSKLDAPKVDLLVKNCLLPLREYFKYFSQNSLPL.

Polar residues predominate over residues M1–L14. Positions M1 to K39 are disordered. The region spanning E75–A207 is the ADD domain. The segment at I86–E116 adopts a GATA-type; atypical zinc-finger fold. The PHD-type; atypical zinc finger occupies Q127–S183.

Homodimer. Heterotetramer composed of 1 DNMT3A homodimer and 2 DNMT3L subunits (DNMT3L-DNMT3A-DNMT3A-DNMT3L). Interacts with histone H3 (via N-terminus); interaction is strongly inhibited by methylation at lysine 4 (H3K4me). Interacts with EZH2; the interaction is direct. Interacts with SPOCD1. In terms of tissue distribution, expressed in testis, thymus, ovary, and heart.

Its subcellular location is the nucleus. Catalytically inactive regulatory factor of DNA methyltransferases that can either promote or inhibit DNA methylation depending on the context. Essential for the function of DNMT3A and DNMT3B: activates DNMT3A and DNMT3B by binding to their catalytic domain. Acts by accelerating the binding of DNA and S-adenosyl-L-methionine (AdoMet) to the methyltransferases and dissociates from the complex after DNA binding to the methyltransferases. Recognizes unmethylated histone H3 lysine 4 (H3K4me0) and induces de novo DNA methylation by recruitment or activation of DNMT3. Plays a key role in embryonic stem cells and germ cells. In germ cells, required for the methylation of imprinted loci together with DNMT3A. In male germ cells, specifically required to methylate retrotransposons, preventing their mobilization. Plays a key role in embryonic stem cells (ESCs) by acting both as an positive and negative regulator of DNA methylation. While it promotes DNA methylation of housekeeping genes together with DNMT3A and DNMT3B, it also acts as an inhibitor of DNA methylation at the promoter of bivalent genes. Interacts with the EZH2 component of the PRC2/EED-EZH2 complex, preventing interaction of DNMT3A and DNMT3B with the PRC2/EED-EZH2 complex, leading to maintain low methylation levels at the promoters of bivalent genes. Promotes differentiation of ESCs into primordial germ cells by inhibiting DNA methylation at the promoter of RHOX5, thereby activating its expression. This is DNA (cytosine-5)-methyltransferase 3-like (Dnmt3l) from Mus musculus (Mouse).